Consider the following 303-residue polypeptide: Bifunctional protein FolD (303 aa).

NADP(+) contacts are provided by residues 165-167 (GRS), S190, and I231.

This sequence belongs to the tetrahydrofolate dehydrogenase/cyclohydrolase family. In terms of assembly, homodimer.

It carries out the reaction (6R)-5,10-methylene-5,6,7,8-tetrahydrofolate + NADP(+) = (6R)-5,10-methenyltetrahydrofolate + NADPH. It catalyses the reaction (6R)-5,10-methenyltetrahydrofolate + H2O = (6R)-10-formyltetrahydrofolate + H(+). It functions in the pathway one-carbon metabolism; tetrahydrofolate interconversion. In terms of biological role, catalyzes the oxidation of 5,10-methylenetetrahydrofolate to 5,10-methenyltetrahydrofolate and then the hydrolysis of 5,10-methenyltetrahydrofolate to 10-formyltetrahydrofolate. The protein is Bifunctional protein FolD of Prochlorococcus marinus (strain NATL1A).